The sequence spans 308 residues: D-alanine--D-alanine ligase (308 aa).

The region spanning 105 to 302 (KAIFRSLGLA…FPDLCERILD (198 aa)) is the ATP-grasp domain. An ATP-binding site is contributed by 133 to 188 (DLPFGLPCVVKPAGEGSSVGVHLVNEAAELGPACRDAASHAGDVIVERYVKGTEVD). Residues D256, E269, and N271 each coordinate Mg(2+).

Belongs to the D-alanine--D-alanine ligase family. Mg(2+) serves as cofactor. Mn(2+) is required as a cofactor.

It is found in the cytoplasm. It carries out the reaction 2 D-alanine + ATP = D-alanyl-D-alanine + ADP + phosphate + H(+). It functions in the pathway cell wall biogenesis; peptidoglycan biosynthesis. Functionally, cell wall formation. In Anaeromyxobacter sp. (strain K), this protein is D-alanine--D-alanine ligase.